Consider the following 153-residue polypeptide: UPF0235 protein C15orf40 (153 aa).

Over residues 1–12 the composition is skewed to basic residues; it reads MLRLRSGLRHLR. The disordered stretch occupies residues 1–55; that stretch reads MLRLRSGLRHLRATPNTRGSARLLCAEMPKKAGATTKGKSQSKEPERPLPPLGPV. The residue at position 116 (S116) is a Phosphoserine.

It belongs to the UPF0235 family.

The protein is UPF0235 protein C15orf40 (C15orf40) of Homo sapiens (Human).